A 274-amino-acid chain; its full sequence is Large ribosomal subunit protein uL2 (274 aa).

Disordered stretches follow at residues 38-57 (KRTG…VGGG) and 224-256 (AMNP…KGYK). A compositionally biased stretch (basic and acidic residues) spans 229 to 239 (DHPHGGGEGRN).

The protein belongs to the universal ribosomal protein uL2 family. Part of the 50S ribosomal subunit. Forms a bridge to the 30S subunit in the 70S ribosome.

Its function is as follows. One of the primary rRNA binding proteins. Required for association of the 30S and 50S subunits to form the 70S ribosome, for tRNA binding and peptide bond formation. It has been suggested to have peptidyltransferase activity; this is somewhat controversial. Makes several contacts with the 16S rRNA in the 70S ribosome. The polypeptide is Large ribosomal subunit protein uL2 (Acinetobacter baumannii (strain AB307-0294)).